The primary structure comprises 127 residues: Large ribosomal subunit protein bL21 (127 aa).

This sequence belongs to the bacterial ribosomal protein bL21 family. Part of the 50S ribosomal subunit. Contacts protein L20.

In terms of biological role, this protein binds to 23S rRNA in the presence of protein L20. This Synechococcus elongatus (strain ATCC 33912 / PCC 7942 / FACHB-805) (Anacystis nidulans R2) protein is Large ribosomal subunit protein bL21.